We begin with the raw amino-acid sequence, 193 residues long: uncharacterized protein (193 aa).

Residues 153–170 (WRYWAVIALIAAVLIYLY) form a helical membrane-spanning segment.

The protein resides in the membrane. This is an uncharacterized protein from Invertebrate iridescent virus 6 (IIV-6).